A 375-amino-acid chain; its full sequence is S-adenosylmethionine:tRNA ribosyltransferase-isomerase (375 aa).

The protein belongs to the QueA family. In terms of assembly, monomer.

It is found in the cytoplasm. The catalysed reaction is 7-aminomethyl-7-carbaguanosine(34) in tRNA + S-adenosyl-L-methionine = epoxyqueuosine(34) in tRNA + adenine + L-methionine + 2 H(+). The protein operates within tRNA modification; tRNA-queuosine biosynthesis. Functionally, transfers and isomerizes the ribose moiety from AdoMet to the 7-aminomethyl group of 7-deazaguanine (preQ1-tRNA) to give epoxyqueuosine (oQ-tRNA). In Rickettsia typhi (strain ATCC VR-144 / Wilmington), this protein is S-adenosylmethionine:tRNA ribosyltransferase-isomerase.